Here is a 201-residue protein sequence, read N- to C-terminus: Recombination protein RecR (201 aa).

A C4-type zinc finger spans residues C60 to C75. The region spanning K83–P177 is the Toprim domain.

This sequence belongs to the RecR family.

Functionally, may play a role in DNA repair. It seems to be involved in an RecBC-independent recombinational process of DNA repair. It may act with RecF and RecO. The chain is Recombination protein RecR from Prochlorococcus marinus (strain MIT 9215).